A 155-amino-acid chain; its full sequence is Interleukin-2 (155 aa).

Positions 1-20 are cleaved as a signal peptide; the sequence is MYKMQLLSCIALTLVLVANS. O-linked (GalNAc...) threonine glycosylation is present at T24. Cysteines 79 and 127 form a disulfide. N-linked (GlcNAc...) asparagine glycosylation is present at N112.

It belongs to the IL-2 family.

It localises to the secreted. Cytokine produced by activated CD4-positive helper T-cells and to a lesser extend activated CD8-positive T-cells and natural killer (NK) cells that plays pivotal roles in the immune response and tolerance. Binds to a receptor complex composed of either the high-affinity trimeric IL-2R (IL2RA/CD25, IL2RB/CD122 and IL2RG/CD132) or the low-affinity dimeric IL-2R (IL2RB and IL2RG). Interaction with the receptor leads to oligomerization and conformation changes in the IL-2R subunits resulting in downstream signaling starting with phosphorylation of JAK1 and JAK3. In turn, JAK1 and JAK3 phosphorylate the receptor to form a docking site leading to the phosphorylation of several substrates including STAT5. This process leads to activation of several pathways including STAT, phosphoinositide-3-kinase/PI3K and mitogen-activated protein kinase/MAPK pathways. Functions as a T-cell growth factor and can increase NK-cell cytolytic activity as well. Promotes strong proliferation of activated B-cells and subsequently immunoglobulin production. Plays a pivotal role in regulating the adaptive immune system by controlling the survival and proliferation of regulatory T-cells, which are required for the maintenance of immune tolerance. Moreover, participates in the differentiation and homeostasis of effector T-cell subsets, including Th1, Th2, Th17 as well as memory CD8-positive T-cells. The sequence is that of Interleukin-2 (IL2) from Canis lupus familiaris (Dog).